The sequence spans 424 residues: Endochitinase 1 (424 aa).

The first 22 residues, 1–22 (MPSLFAQSLAIIATLQATLGLA), serve as a signal peptide directing secretion. The 364-residue stretch at 39 to 402 (YVNAVYFTNW…GTSSNKLGGP (364 aa)) folds into the GH18 domain. N-linked (GlcNAc...) asparagine glycosylation is found at N74, N78, and N96. Chitin-binding positions include 103-104 (GN) and 130-133 (GGWT). E172 acts as the Proton donor in catalysis. Residues Y173 and 238–241 (MAYD) each bind chitin. N248 and N347 each carry an N-linked (GlcNAc...) asparagine glycan. A chitin-binding site is contributed by W379. The interval 385–412 (RQGPDSLIGTSSNKLGGPDTTENLLNYP) is disordered. Residues 392 to 408 (IGTSSNKLGGPDTTENL) show a composition bias toward polar residues.

The protein belongs to the glycosyl hydrolase 18 family. Chitinase class V subfamily.

The protein resides in the secreted. The catalysed reaction is Random endo-hydrolysis of N-acetyl-beta-D-glucosaminide (1-&gt;4)-beta-linkages in chitin and chitodextrins.. Secreted chitinase involved in the degradation of chitin, a component of the cell walls of fungi and exoskeletal elements of some animals (including worms and arthropods). Participates in the infection process and directly acts in the penetration process of the host cuticle. This is Endochitinase 1 (chit1) from Metarhizium robertsii (strain ARSEF 23 / ATCC MYA-3075) (Metarhizium anisopliae (strain ARSEF 23)).